A 487-amino-acid chain; its full sequence is Argininosuccinate lyase (487 aa).

This sequence belongs to the lyase 1 family. Argininosuccinate lyase subfamily.

The protein resides in the cytoplasm. The enzyme catalyses 2-(N(omega)-L-arginino)succinate = fumarate + L-arginine. The protein operates within amino-acid biosynthesis; L-arginine biosynthesis; L-arginine from L-ornithine and carbamoyl phosphate: step 3/3. The protein is Argininosuccinate lyase of Methanococcus aeolicus (strain ATCC BAA-1280 / DSM 17508 / OCM 812 / Nankai-3).